A 651-amino-acid polypeptide reads, in one-letter code: Peptide-N(4)-(N-acetyl-beta-glucosaminyl)asparagine amidase (651 aa).

At Ala-2 the chain carries N-acetylalanine. The region spanning 30–91 (EASKLLLTYA…EGETHLIFPK (62 aa)) is the PUB domain. A disordered region spans residues 116–153 (SSQKVEFSQHPAAVRLPAEQPEDPTGLMQHSGNQPGQP). Positions 143 to 152 (MQHSGNQPGQ) are enriched in polar residues. Zn(2+) is bound by residues Cys-247, Cys-250, Cys-280, and Cys-283. Catalysis depends on Cys-306, which acts as the Nucleophile. Active-site residues include His-333 and Asp-350. A PAW domain is found at 451-651 (ELGGRVSGSL…LEIIITFSDL (201 aa)).

The protein belongs to the transglutaminase-like superfamily. PNGase family. As to quaternary structure, component of a complex required to couple retrotranslocation, ubiquitination and deglycosylation composed of NGLY1, SAKS1, AMFR, VCP and RAD23B. Interacts with the proteasome components RAD23B and PSMC1. Interacts with directly with VCP. Interacts with DERL1, bringing it close to the endoplasmic reticulum membrane. Interacts with SAKS1. The cofactor is Zn(2+).

It localises to the cytoplasm. The enzyme catalyses Hydrolysis of an N(4)-(acetyl-beta-D-glucosaminyl)asparagine residue in which the glucosamine residue may be further glycosylated, to yield a (substituted) N-acetyl-beta-D-glucosaminylamine and a peptide containing an aspartate residue.. With respect to regulation, inhibited by Z-VAD-fmk, a well-known caspase inhibitor, which inhibits enzyme activity through covalent binding of the carbohydrate to the single Cys-306 residue. In terms of biological role, specifically deglycosylates the denatured form of N-linked glycoproteins in the cytoplasm and assists their proteasome-mediated degradation. Cleaves the beta-aspartyl-glucosamine (GlcNAc) of the glycan and the amide side chain of Asn, converting Asn to Asp. Prefers proteins containing high-mannose over those bearing complex type oligosaccharides. Can recognize misfolded proteins in the endoplasmic reticulum that are exported to the cytosol to be destroyed and deglycosylate them, while it has no activity toward native proteins. Deglycosylation is a prerequisite for subsequent proteasome-mediated degradation of some, but not all, misfolded glycoproteins. The sequence is that of Peptide-N(4)-(N-acetyl-beta-glucosaminyl)asparagine amidase (Ngly1) from Rattus norvegicus (Rat).